Here is a 129-residue protein sequence, read N- to C-terminus: Large ribosomal subunit protein bL17 (129 aa).

This sequence belongs to the bacterial ribosomal protein bL17 family. As to quaternary structure, part of the 50S ribosomal subunit. Contacts protein L32.

This Thiobacillus denitrificans (strain ATCC 25259 / T1) protein is Large ribosomal subunit protein bL17.